The chain runs to 213 residues: Ribosomal RNA small subunit methyltransferase G (213 aa).

Residues glycine 75, phenylalanine 80, 128 to 129 (IE), and arginine 144 each bind S-adenosyl-L-methionine.

This sequence belongs to the methyltransferase superfamily. RNA methyltransferase RsmG family.

It is found in the cytoplasm. It catalyses the reaction guanosine(527) in 16S rRNA + S-adenosyl-L-methionine = N(7)-methylguanosine(527) in 16S rRNA + S-adenosyl-L-homocysteine. Its function is as follows. Specifically methylates the N7 position of guanine in position 527 of 16S rRNA. The chain is Ribosomal RNA small subunit methyltransferase G from Brucella anthropi (strain ATCC 49188 / DSM 6882 / CCUG 24695 / JCM 21032 / LMG 3331 / NBRC 15819 / NCTC 12168 / Alc 37) (Ochrobactrum anthropi).